The chain runs to 252 residues: Large ribosomal subunit protein uL4 (252 aa).

The protein belongs to the universal ribosomal protein uL4 family. Part of the 50S ribosomal subunit.

One of the primary rRNA binding proteins, this protein initially binds near the 5'-end of the 23S rRNA. It is important during the early stages of 50S assembly. It makes multiple contacts with different domains of the 23S rRNA in the assembled 50S subunit and ribosome. Functionally, forms part of the polypeptide exit tunnel. The protein is Large ribosomal subunit protein uL4 of Methanococcus vannielii (strain ATCC 35089 / DSM 1224 / JCM 13029 / OCM 148 / SB).